The following is a 585-amino-acid chain: Potassium-transporting ATPase potassium-binding subunit (585 aa).

12 helical membrane passes run 23–43 (GVII…ILSF), 85–105 (FINL…VIMF), 152–172 (FVIT…SMAF), 194–214 (IFDL…LAGI), 275–295 (VEFV…GIVF), 307–327 (VVMF…FAGV), 345–365 (AIGI…STGA), 367–387 (NAAL…GLLL), 397–417 (GVLN…LMVG), 444–464 (LLVV…SSFV), 502–522 (LDGV…LIIA), and 547–567 (VLLI…IIVL).

The protein belongs to the KdpA family. As to quaternary structure, the system is composed of three essential subunits: KdpA, KdpB and KdpC.

Its subcellular location is the cell membrane. In terms of biological role, part of the high-affinity ATP-driven potassium transport (or Kdp) system, which catalyzes the hydrolysis of ATP coupled with the electrogenic transport of potassium into the cytoplasm. This subunit binds the extracellular potassium ions and delivers the ions to the membrane domain of KdpB through an intramembrane tunnel. The polypeptide is Potassium-transporting ATPase potassium-binding subunit (Thermoplasma acidophilum (strain ATCC 25905 / DSM 1728 / JCM 9062 / NBRC 15155 / AMRC-C165)).